The following is a 378-amino-acid chain: Lipid-A-disaccharide synthase (378 aa).

It belongs to the LpxB family.

It carries out the reaction a lipid X + a UDP-2-N,3-O-bis[(3R)-3-hydroxyacyl]-alpha-D-glucosamine = a lipid A disaccharide + UDP + H(+). It functions in the pathway bacterial outer membrane biogenesis; LPS lipid A biosynthesis. Functionally, condensation of UDP-2,3-diacylglucosamine and 2,3-diacylglucosamine-1-phosphate to form lipid A disaccharide, a precursor of lipid A, a phosphorylated glycolipid that anchors the lipopolysaccharide to the outer membrane of the cell. In Methylobacillus flagellatus (strain ATCC 51484 / DSM 6875 / VKM B-1610 / KT), this protein is Lipid-A-disaccharide synthase.